Here is a 184-residue protein sequence, read N- to C-terminus: Protein GrpE (184 aa).

Over residues 1 to 10 the composition is skewed to basic and acidic residues; the sequence is MSQETEKDLE. The tract at residues 1–38 is disordered; the sequence is MSQETEKDLEQTQNEELVEEAQSDEKKDQEVDPVEAAQ.

This sequence belongs to the GrpE family. Homodimer.

It is found in the cytoplasm. Participates actively in the response to hyperosmotic and heat shock by preventing the aggregation of stress-denatured proteins, in association with DnaK and GrpE. It is the nucleotide exchange factor for DnaK and may function as a thermosensor. Unfolded proteins bind initially to DnaJ; upon interaction with the DnaJ-bound protein, DnaK hydrolyzes its bound ATP, resulting in the formation of a stable complex. GrpE releases ADP from DnaK; ATP binding to DnaK triggers the release of the substrate protein, thus completing the reaction cycle. Several rounds of ATP-dependent interactions between DnaJ, DnaK and GrpE are required for fully efficient folding. The chain is Protein GrpE from Sulfurovum sp. (strain NBC37-1).